The sequence spans 162 residues: ATP synthase subunit b (162 aa).

A helical membrane pass occupies residues 10–29 (LIWTIINFAVLLWGMHRFLY).

Belongs to the ATPase B chain family. F-type ATPases have 2 components, F(1) - the catalytic core - and F(0) - the membrane proton channel. F(1) has five subunits: alpha(3), beta(3), gamma(1), delta(1), epsilon(1). F(0) has three main subunits: a(1), b(2) and c(10-14). The alpha and beta chains form an alternating ring which encloses part of the gamma chain. F(1) is attached to F(0) by a central stalk formed by the gamma and epsilon chains, while a peripheral stalk is formed by the delta and b chains.

It localises to the cell membrane. Its function is as follows. F(1)F(0) ATP synthase produces ATP from ADP in the presence of a proton or sodium gradient. F-type ATPases consist of two structural domains, F(1) containing the extramembraneous catalytic core and F(0) containing the membrane proton channel, linked together by a central stalk and a peripheral stalk. During catalysis, ATP synthesis in the catalytic domain of F(1) is coupled via a rotary mechanism of the central stalk subunits to proton translocation. Component of the F(0) channel, it forms part of the peripheral stalk, linking F(1) to F(0). The protein is ATP synthase subunit b of Symbiobacterium thermophilum (strain DSM 24528 / JCM 14929 / IAM 14863 / T).